We begin with the raw amino-acid sequence, 184 residues long: ATP-dependent protease subunit HslV (184 aa).

Residue Thr-12 is part of the active site. 3 residues coordinate Na(+): Ala-167, Cys-170, and Thr-173.

Belongs to the peptidase T1B family. HslV subfamily. As to quaternary structure, a double ring-shaped homohexamer of HslV is capped on each side by a ring-shaped HslU homohexamer. The assembly of the HslU/HslV complex is dependent on binding of ATP.

Its subcellular location is the cytoplasm. The enzyme catalyses ATP-dependent cleavage of peptide bonds with broad specificity.. Its activity is regulated as follows. Allosterically activated by HslU binding. In terms of biological role, protease subunit of a proteasome-like degradation complex believed to be a general protein degrading machinery. The sequence is that of ATP-dependent protease subunit HslV from Wolbachia pipientis subsp. Culex pipiens (strain wPip).